Consider the following 262-residue polypeptide: Shikimate dehydrogenase (NADP(+)) (262 aa).

Shikimate contacts are provided by residues 15–17 and Thr62; that span reads SRS. The Proton acceptor role is filled by Lys66. Position 78 (Glu78) interacts with NADP(+). 2 residues coordinate shikimate: Asn87 and Asp102. NADP(+) is bound by residues 126 to 130, 150 to 155, and Met214; these read GAGGA and NRTLAR. Position 216 (Tyr216) interacts with shikimate. An NADP(+)-binding site is contributed by Gly236.

Belongs to the shikimate dehydrogenase family. Homodimer.

It catalyses the reaction shikimate + NADP(+) = 3-dehydroshikimate + NADPH + H(+). It participates in metabolic intermediate biosynthesis; chorismate biosynthesis; chorismate from D-erythrose 4-phosphate and phosphoenolpyruvate: step 4/7. Functionally, involved in the biosynthesis of the chorismate, which leads to the biosynthesis of aromatic amino acids. Catalyzes the reversible NADPH linked reduction of 3-dehydroshikimate (DHSA) to yield shikimate (SA). In Acinetobacter baumannii (strain ACICU), this protein is Shikimate dehydrogenase (NADP(+)).